The chain runs to 130 residues: D-ribose pyranase (130 aa).

His-20 serves as the catalytic Proton donor. Substrate contacts are provided by residues Asp-28, His-97, and 119 to 121 (YSN).

This sequence belongs to the RbsD / FucU family. RbsD subfamily. As to quaternary structure, homodecamer.

It is found in the cytoplasm. The catalysed reaction is beta-D-ribopyranose = beta-D-ribofuranose. Its pathway is carbohydrate metabolism; D-ribose degradation; D-ribose 5-phosphate from beta-D-ribopyranose: step 1/2. Functionally, catalyzes the interconversion of beta-pyran and beta-furan forms of D-ribose. This Lacticaseibacillus casei (strain BL23) (Lactobacillus casei) protein is D-ribose pyranase.